The primary structure comprises 85 residues: MKLFLLLVISASMLIDGLVNADGYIRGSNGCKVSCLWGNEGCNKECKAFGAYYGYCWTWGLACWCEGLPDDKTWKSESNTCGGKK.

The first 21 residues, 1 to 21, serve as a signal peptide directing secretion; sequence MKLFLLLVISASMLIDGLVNA. The LCN-type CS-alpha/beta domain maps to 22–82; sequence DGYIRGSNGC…TWKSESNTCG (61 aa). 4 cysteine pairs are disulfide-bonded: cysteine 31-cysteine 81, cysteine 35-cysteine 56, cysteine 42-cysteine 63, and cysteine 46-cysteine 65.

Belongs to the long (4 C-C) scorpion toxin superfamily. Sodium channel inhibitor family. Beta subfamily. Expressed by the venom gland.

It is found in the secreted. In terms of biological role, depressant insect beta-toxins cause a transient contraction paralysis followed by a slow flaccid paralysis. They bind voltage-independently at site-4 of sodium channels (Nav) and shift the voltage of activation toward more negative potentials thereby affecting sodium channel activation and promoting spontaneous and repetitive firing. This toxin is active only on insects. Has potential anti-epilepsy effect. This chain is Neurotoxin BmKAEP2, found in Olivierus martensii (Manchurian scorpion).